The primary structure comprises 419 residues: Synaptic vesicle membrane protein VAT-1 homolog-like (419 aa).

Positions 1–25 (MAKEGVEKAEETEQMIEKEAGKEPA) are enriched in basic and acidic residues. Disordered regions lie at residues 1–36 (MAKE…SHRL) and 384–419 (PTPL…PFIQ). The residue at position 392 (Ser392) is a Phosphoserine. Phosphothreonine occurs at positions 393 and 395. Ser396 carries the phosphoserine modification. The span at 397 to 407 (EAGEEEEDHEG) shows a compositional bias: acidic residues. The span at 408-419 (DSENKERMPFIQ) shows a compositional bias: basic and acidic residues.

The protein belongs to the zinc-containing alcohol dehydrogenase family. Quinone oxidoreductase subfamily. Detected in skin fibroblasts.

This Homo sapiens (Human) protein is Synaptic vesicle membrane protein VAT-1 homolog-like (VAT1L).